The chain runs to 932 residues: Glycine dehydrogenase (decarboxylating) (932 aa).

An N6-(pyridoxal phosphate)lysine modification is found at Lys685.

It belongs to the GcvP family. The glycine cleavage system is composed of four proteins: P, T, L and H. The cofactor is pyridoxal 5'-phosphate.

The catalysed reaction is N(6)-[(R)-lipoyl]-L-lysyl-[glycine-cleavage complex H protein] + glycine + H(+) = N(6)-[(R)-S(8)-aminomethyldihydrolipoyl]-L-lysyl-[glycine-cleavage complex H protein] + CO2. In terms of biological role, the glycine cleavage system catalyzes the degradation of glycine. The P protein binds the alpha-amino group of glycine through its pyridoxal phosphate cofactor; CO(2) is released and the remaining methylamine moiety is then transferred to the lipoamide cofactor of the H protein. In Brucella melitensis biotype 2 (strain ATCC 23457), this protein is Glycine dehydrogenase (decarboxylating).